Consider the following 227-residue polypeptide: Charged multivesicular body protein 4b (227 aa).

Disordered regions lie at residues 1-26 and 186-227; these read MSGI…SPQE and SGPE…AGNM. The segment covering 9–20 has biased composition (gly residues); it reads FGAGAGGKGAGK. Residues 25–185 are a coiled coil; sequence QEAIQRLRDT…EELDKNLLEI (161 aa).

Belongs to the SNF7 family. In terms of assembly, probable core component of the endosomal sorting required for transport complex III (ESCRT-III). ESCRT-III components are thought to multimerize to form a flat lattice on the perimeter membrane of the endosome.

It localises to the cytoplasm. It is found in the cytosol. The protein localises to the late endosome membrane. Its subcellular location is the midbody. Probable core component of the endosomal sorting required for transport complex III (ESCRT-III) which is involved in multivesicular bodies (MVBs) formation and sorting of endosomal cargo proteins into MVBs. MVBs contain intraluminal vesicles (ILVs) that are generated by invagination and scission from the limiting membrane of the endosome and mostly are delivered to lysosomes enabling degradation of membrane proteins, such as stimulated growth factor receptors, lysosomal enzymes and lipids. This Gallus gallus (Chicken) protein is Charged multivesicular body protein 4b (CHMP4B).